A 362-amino-acid chain; its full sequence is S-adenosylmethionine:tRNA ribosyltransferase-isomerase (362 aa).

This sequence belongs to the QueA family. Monomer.

Its subcellular location is the cytoplasm. It catalyses the reaction 7-aminomethyl-7-carbaguanosine(34) in tRNA + S-adenosyl-L-methionine = epoxyqueuosine(34) in tRNA + adenine + L-methionine + 2 H(+). It functions in the pathway tRNA modification; tRNA-queuosine biosynthesis. In terms of biological role, transfers and isomerizes the ribose moiety from AdoMet to the 7-aminomethyl group of 7-deazaguanine (preQ1-tRNA) to give epoxyqueuosine (oQ-tRNA). This is S-adenosylmethionine:tRNA ribosyltransferase-isomerase from Xanthobacter autotrophicus (strain ATCC BAA-1158 / Py2).